The primary structure comprises 283 residues: Short-chain dehydrogenase anuB (283 aa).

NADP(+) is bound by residues Thr-57, Asp-78, Asn-106, Tyr-166, Lys-170, Val-199, and Thr-201. Tyr-166 (proton acceptor) is an active-site residue. Catalysis depends on Tyr-166, which acts as the Proton donor. Lys-170 acts as the Lowers pKa of active site Tyr in catalysis.

It belongs to the short-chain dehydrogenases/reductases (SDR) family.

Its pathway is secondary metabolite biosynthesis. In terms of biological role, highly reducing polyketide synthase; part of the gene cluster that mediates the biosynthesis of annullatin D, an alkylated aromatic polyketide with a fused dihydrobenzofuran lactone ring system that exhibits potent agonistic activities toward the cannabinoid receptors. The annullatin backbone 2-hydroxymethyl-3-pentylphenol is assembled from one acetyl-CoA starter unit and 5 malonyl-CoA elongation units by cooperation of the highly reducing polyketide synthase anuA, the short-chain dehydrogenase anuB and the oxidoreductase anuC, before being hydroxylated at the C-5 alkyl chain by the cytochrome P450 monooxygenase anuE to form (8S)-annullatin E. The prenyltransferase anuH subsequently installs one isoprenyl group at the benzene ring to form (8S)-annullatin J. Enzymatic or nonenzymatic dihydro-benzofuran ring formation between the prenyl and the phenolic hydroxyl groups in (8S)-annullatin J results in two diastereomers (2S,9S)-annullatin H and compound 12. The intermediate (2S,9S)-annullatin H is then converted to (2S,9S)-annullatin D by the FAD-linked oxidoreductase anuG-catalyzed five-member lactone ring formation. The isomer 12 acts as a substrate for the short-chain dehydrogenase anuF and is oxidized to (2R)-annullatin F, which is subsequently acetylated by an acetyltransferase leading to (2R)-annullatin G formation. The remaining enzymes identified within the cluster, anuD, anuI and anuJ, seem not to be involved in annullatin biosynthesis. In Penicillium roqueforti (strain FM164), this protein is Short-chain dehydrogenase anuB.